We begin with the raw amino-acid sequence, 280 residues long: Probable holocytochrome-c-type synthase (280 aa).

Positions 1–95 (MGSSQSTPKV…FALPTKREKS (95 aa)) are disordered. 2 HRM repeats span residues 35 to 40 (QCPLTP) and 56 to 61 (ACPVGA).

This sequence belongs to the cytochrome c-type heme lyase family.

It is found in the mitochondrion inner membrane. The enzyme catalyses holo-[cytochrome c] = apo-[cytochrome c] + heme b. Probable lyase that catalyzes the covalent linking of the heme group to the cytochrome C apoprotein to produce the mature functional cytochrome. This Caenorhabditis elegans protein is Probable holocytochrome-c-type synthase (cchl-1).